A 162-amino-acid chain; its full sequence is NADH-quinone oxidoreductase subunit I (162 aa).

4Fe-4S ferredoxin-type domains follow at residues 53–83 (LRRYPNGEERCIACKLCEAVCPALAITIDSA) and 93–122 (TRYDIDLFKCIFCGFCEESCPVDSIVETHI). C63, C66, C69, C73, C102, C105, C108, and C112 together coordinate [4Fe-4S] cluster.

Belongs to the complex I 23 kDa subunit family. As to quaternary structure, NDH-1 is composed of 14 different subunits. Subunits NuoA, H, J, K, L, M, N constitute the membrane sector of the complex. It depends on [4Fe-4S] cluster as a cofactor.

The protein resides in the cell inner membrane. It catalyses the reaction a quinone + NADH + 5 H(+)(in) = a quinol + NAD(+) + 4 H(+)(out). Functionally, NDH-1 shuttles electrons from NADH, via FMN and iron-sulfur (Fe-S) centers, to quinones in the respiratory chain. The immediate electron acceptor for the enzyme in this species is believed to be ubiquinone. Couples the redox reaction to proton translocation (for every two electrons transferred, four hydrogen ions are translocated across the cytoplasmic membrane), and thus conserves the redox energy in a proton gradient. The polypeptide is NADH-quinone oxidoreductase subunit I (Xanthomonas axonopodis pv. citri (strain 306)).